The sequence spans 562 residues: Sulfite reductase [NADPH] hemoprotein beta-component (562 aa).

[4Fe-4S] cluster is bound by residues Cys425, Cys431, Cys470, and Cys474. Cys474 contributes to the siroheme binding site.

Belongs to the nitrite and sulfite reductase 4Fe-4S domain family. Alpha(8)-beta(8). The alpha component is a flavoprotein, the beta component is a hemoprotein. It depends on siroheme as a cofactor. [4Fe-4S] cluster is required as a cofactor.

The catalysed reaction is hydrogen sulfide + 3 NADP(+) + 3 H2O = sulfite + 3 NADPH + 4 H(+). It participates in sulfur metabolism; hydrogen sulfide biosynthesis; hydrogen sulfide from sulfite (NADPH route): step 1/1. Component of the sulfite reductase complex that catalyzes the 6-electron reduction of sulfite to sulfide. This is one of several activities required for the biosynthesis of L-cysteine from sulfate. In Tolumonas auensis (strain DSM 9187 / NBRC 110442 / TA 4), this protein is Sulfite reductase [NADPH] hemoprotein beta-component.